A 1096-amino-acid polypeptide reads, in one-letter code: cAMP/cGMP-dependent 3',5'-cAMP/cGMP phosphodiesterase B (1096 aa).

The segment at 216–248 (SSSKMIINDSPRTQQRNGTTEQQKKQQQQQYLQ) is disordered. Over residues 225-236 (SPRTQQRNGTTE) the composition is skewed to polar residues. A divalent metal cation contacts are provided by His-573, His-575, and Asp-577. Residues 783 to 930 (VFSK…DLSH) and 946 to 1070 (ITQH…EDNI) contribute to the a nucleoside 3',5'-cyclic phosphate site.

The protein belongs to the metallo-beta-lactamase superfamily. cNMP phosphodiesterase family. Requires Mn(2+) as cofactor. Mg(2+) serves as cofactor. The cofactor is Zn(2+).

Its subcellular location is the cytoplasm. The protein localises to the cytosol. The enzyme catalyses 3',5'-cyclic AMP + H2O = AMP + H(+). It catalyses the reaction 3',5'-cyclic GMP + H2O = GMP + H(+). In terms of biological role, dual specificity cAMP and cGMP phosphodiesterase with marked preference for cyclic AMP, which is activated by cAMP and cGMP. Likely functions as a cAMP-stimulated cAMP-phosphodiesterase which may play a role in regulating the cAMP relay response. This is cAMP/cGMP-dependent 3',5'-cAMP/cGMP phosphodiesterase B (pdeE) from Dictyostelium discoideum (Social amoeba).